The chain runs to 89 residues: Small ribosomal subunit protein uS15 (89 aa).

It belongs to the universal ribosomal protein uS15 family. As to quaternary structure, part of the 30S ribosomal subunit. Forms a bridge to the 50S subunit in the 70S ribosome, contacting the 23S rRNA.

One of the primary rRNA binding proteins, it binds directly to 16S rRNA where it helps nucleate assembly of the platform of the 30S subunit by binding and bridging several RNA helices of the 16S rRNA. In terms of biological role, forms an intersubunit bridge (bridge B4) with the 23S rRNA of the 50S subunit in the ribosome. The protein is Small ribosomal subunit protein uS15 of Solibacter usitatus (strain Ellin6076).